We begin with the raw amino-acid sequence, 1040 residues long: DNA mismatch repair protein MutS (1040 aa).

Positions 1–10 are enriched in polar residues; the sequence is MPVKPSAQNN. Disordered regions lie at residues 1-22 and 130-157; these read MPVK…SVPV and ATGT…SKST. The span at 11–22 shows a compositional bias: low complexity; it reads SPSKPTSKSVPV. The span at 130 to 143 shows a compositional bias: polar residues; sequence ATGTDNANNPSNAP. Residue 759 to 766 participates in ATP binding; that stretch reads GPNMGGKS.

It belongs to the DNA mismatch repair MutS family.

Its function is as follows. This protein is involved in the repair of mismatches in DNA. It is possible that it carries out the mismatch recognition step. This protein has a weak ATPase activity. The polypeptide is DNA mismatch repair protein MutS (Psychrobacter cryohalolentis (strain ATCC BAA-1226 / DSM 17306 / VKM B-2378 / K5)).